A 303-amino-acid polypeptide reads, in one-letter code: Aspartate carbamoyltransferase catalytic subunit (303 aa).

Residues Arg51 and Thr52 each contribute to the carbamoyl phosphate site. Lys80 contacts L-aspartate. Positions 101, 129, and 132 each coordinate carbamoyl phosphate. Arg162 and Arg221 together coordinate L-aspartate. Residues Leu260 and Pro261 each coordinate carbamoyl phosphate.

The protein belongs to the aspartate/ornithine carbamoyltransferase superfamily. ATCase family. Heterooligomer of catalytic and regulatory chains.

It catalyses the reaction carbamoyl phosphate + L-aspartate = N-carbamoyl-L-aspartate + phosphate + H(+). It participates in pyrimidine metabolism; UMP biosynthesis via de novo pathway; (S)-dihydroorotate from bicarbonate: step 2/3. Its function is as follows. Catalyzes the condensation of carbamoyl phosphate and aspartate to form carbamoyl aspartate and inorganic phosphate, the committed step in the de novo pyrimidine nucleotide biosynthesis pathway. This is Aspartate carbamoyltransferase catalytic subunit from Saccharolobus islandicus (strain M.16.27) (Sulfolobus islandicus).